Here is a 266-residue protein sequence, read N- to C-terminus: Transcription factor BIP1 (266 aa).

A disordered region spans residues 1–73 (MAMYMPSTAS…DREAQRAIRA (73 aa)). 2 stretches are compositionally biased toward polar residues: residues 7-22 (STASSTTHIRSPSGTP) and 47-56 (RSVSTLTPSQ). Positions 54–95 (PSQLARKRANDREAQRAIRARTKEHIERLEREVEELKSKQNR) constitute a bZIP domain. The segment at 59-81 (RKRANDREAQRAIRARTKEHIER) is basic motif. Over residues 61–73 (RANDREAQRAIRA) the composition is skewed to basic and acidic residues. Positions 82–89 (LEREVEEL) are leucine-zipper.

This sequence belongs to the bZIP family. As to expression, expressed in appressoria.

It is found in the nucleus. In terms of biological role, transcription factor that is required for infection of plants hosts. Is not implicated in the development of appressoria or the subsequent penetration of host leaves, but is necessary for the initial establishment of the fungus within plant cells by orchestrating the expression of a unique set of early invasion-related genes within appressoria, encoding secreted effectors, enzymes, secondary metabolism-related enzymes, and signaling membrane receptors. Controls the expression of targeted genes by interacting directly with a 5'-TGACTC-3' motif present in their promoters. The chain is Transcription factor BIP1 from Pyricularia oryzae (strain 70-15 / ATCC MYA-4617 / FGSC 8958) (Rice blast fungus).